The primary structure comprises 265 residues: Basic leucine zipper 6 (265 aa).

2 disordered regions span residues 1–24 (MAQL…SAGG) and 77–139 (LMSM…RDPK). Residues 85–97 (GGSSAPGSDNGGS) show a composition bias toward low complexity. The segment covering 122–132 (TQEQAAATSPT) has biased composition (polar residues). The bZIP domain occupies 137-189 (DPKRVKRILANRQSAQRSRVRKLQYISELERSVTTLQNEVSVLSPRVAFLDQQ). Residues 139–158 (KRVKRILANRQSAQRSRVRK) are basic motif. The leucine-zipper stretch occupies residues 165 to 186 (LERSVTTLQNEVSVLSPRVAFL). The interval 239–265 (LSGGLAADHAHVHGGPPPVRAEKELMS) is disordered.

As to expression, expressed in roots, shoots and panicles.

It is found in the nucleus. Functionally, transcription regulator. In Oryza sativa subsp. japonica (Rice), this protein is Basic leucine zipper 6 (BZIP06).